Reading from the N-terminus, the 223-residue chain is Imidazoleglycerol-phosphate dehydratase (223 aa).

The protein belongs to the imidazoleglycerol-phosphate dehydratase family.

It carries out the reaction D-erythro-1-(imidazol-4-yl)glycerol 3-phosphate = 3-(imidazol-4-yl)-2-oxopropyl phosphate + H2O. It functions in the pathway amino-acid biosynthesis; L-histidine biosynthesis; L-histidine from 5-phospho-alpha-D-ribose 1-diphosphate: step 6/9. The protein is Imidazoleglycerol-phosphate dehydratase (HIS3) of Zygosaccharomyces bailii.